The sequence spans 224 residues: Protein HLJ1 (224 aa).

The region spanning 18 to 87 (DKHEFYEILK…RSIYDRIGRD (70 aa)) is the J domain. The segment covering 84-93 (IGRDPDDRQM) has biased composition (basic and acidic residues). Residues 84–107 (IGRDPDDRQMPSRGAASGFRGSAG) form a disordered region. Position 109 is a phosphoserine (S109). A disordered region spans residues 173 to 192 (NRGGSPFMRQQPRSRQQQQQ). The segment covering 181–192 (RQQPRSRQQQQQ) has biased composition (low complexity).

This Saccharomyces cerevisiae (strain ATCC 204508 / S288c) (Baker's yeast) protein is Protein HLJ1 (HLJ1).